The following is a 170-amino-acid chain: Lipoprotein signal peptidase (170 aa).

The next 5 membrane-spanning stretches (helical) occupy residues 13 to 33 (IFISILVFFDQWSKYLVVTYV), 72 to 92 (LFFLIIPIIILVFVFSFSLKE), 96 to 113 (VSRFALILILSGGIGNII), 116 to 136 (LFRPLGVVDFLDVKFFGIFGL), and 142 to 162 (FNFADSYVVVGMIVFIIYDLF). Catalysis depends on residues Asp124 and Asp146.

This sequence belongs to the peptidase A8 family.

It is found in the cell inner membrane. It carries out the reaction Release of signal peptides from bacterial membrane prolipoproteins. Hydrolyzes -Xaa-Yaa-Zaa-|-(S,diacylglyceryl)Cys-, in which Xaa is hydrophobic (preferably Leu), and Yaa (Ala or Ser) and Zaa (Gly or Ala) have small, neutral side chains.. The protein operates within protein modification; lipoprotein biosynthesis (signal peptide cleavage). This protein specifically catalyzes the removal of signal peptides from prolipoproteins. This chain is Lipoprotein signal peptidase, found in Borrelia duttonii (strain Ly).